Reading from the N-terminus, the 483-residue chain is MORN repeat-containing protein 1 (483 aa).

A Phosphoserine modification is found at serine 18. MORN repeat units follow at residues 39–61 (YEGE…DGSY), 62–84 (YEGE…WSGN), 86–108 (YSGQ…AGGH), 109–131 (YEGE…DGQV), 132–154 (YQGS…NGDK), 155–177 (YEGD…DGST), and 178–200 (YKGQ…SGVT). The interval 392–427 (EKAGNRPKGDRSPPEVLSTAQEPLRGTNRSDGTTAE) is disordered. Residues 394-404 (AGNRPKGDRSP) are compositionally biased toward basic and acidic residues. Serine 403 is modified (phosphoserine). Residues 418–427 (TNRSDGTTAE) are compositionally biased toward polar residues.

The chain is MORN repeat-containing protein 1 (Morn1) from Rattus norvegicus (Rat).